A 306-amino-acid chain; its full sequence is Pantothenate kinase (306 aa).

90 to 97 is a binding site for ATP; that stretch reads GSVAVGKS.

It belongs to the prokaryotic pantothenate kinase family.

It is found in the cytoplasm. It catalyses the reaction (R)-pantothenate + ATP = (R)-4'-phosphopantothenate + ADP + H(+). Its pathway is cofactor biosynthesis; coenzyme A biosynthesis; CoA from (R)-pantothenate: step 1/5. The protein is Pantothenate kinase (coaA) of Lactococcus lactis subsp. lactis (strain IL1403) (Streptococcus lactis).